We begin with the raw amino-acid sequence, 763 residues long: Photosystem I P700 chlorophyll a apoprotein A1 (763 aa).

The next 8 membrane-spanning stretches (helical) occupy residues 72 to 95 (IFSA…FHGA), 158 to 181 (LYVT…FHYH), 197 to 221 (LNHH…HVSL), 305 to 323 (TAHH…GHMY), 360 to 383 (WHAQ…HHMY), 399 to 425 (LSLF…IFMV), 447 to 469 (AIIS…LYIH), and 544 to 562 (FMVH…LILL). The [4Fe-4S] cluster site is built by C586 and C595. Helical transmembrane passes span 602 to 623 (HVFL…HYSW) and 677 to 699 (TSAY…MFLF). H688 provides a ligand contact to chlorophyll a'. The chlorophyll a site is built by M696 and Y704. Residue W705 coordinates phylloquinone. Residues 737–757 (AVGVAHYLLGGIVTTWSFFLA) form a helical membrane-spanning segment.

This sequence belongs to the PsaA/PsaB family. As to quaternary structure, the PsaA/B heterodimer binds the P700 chlorophyll special pair and subsequent electron acceptors. PSI consists of a core antenna complex that captures photons, and an electron transfer chain that converts photonic excitation into a charge separation. The cyanobacterial PSI reaction center is composed of one copy each of PsaA,B,C,D,E,F,I,J,K,L,M and X, and forms trimeric complexes. The cofactor is PSI electron transfer chain: 5 chlorophyll a, 1 chlorophyll a', 2 phylloquinones and 3 4Fe-4S clusters. PSI core antenna: 90 chlorophyll a, 22 carotenoids, 3 phospholipids and 1 galactolipid. P700 is a chlorophyll a/chlorophyll a' dimer, A0 is one or more chlorophyll a, A1 is one or both phylloquinones and FX is a shared 4Fe-4S iron-sulfur center..

It is found in the cellular thylakoid membrane. It catalyses the reaction reduced [plastocyanin] + hnu + oxidized [2Fe-2S]-[ferredoxin] = oxidized [plastocyanin] + reduced [2Fe-2S]-[ferredoxin]. In terms of biological role, psaA and PsaB bind P700, the primary electron donor of photosystem I (PSI), as well as the electron acceptors A0, A1 and FX. PSI is a plastocyanin/cytochrome c6-ferredoxin oxidoreductase, converting photonic excitation into a charge separation, which transfers an electron from the donor P700 chlorophyll pair to the spectroscopically characterized acceptors A0, A1, FX, FA and FB in turn. Oxidized P700 is reduced on the lumenal side of the thylakoid membrane by plastocyanin or cytochrome c6. This is Photosystem I P700 chlorophyll a apoprotein A1 from Synechococcus elongatus (strain ATCC 33912 / PCC 7942 / FACHB-805) (Anacystis nidulans R2).